We begin with the raw amino-acid sequence, 72 residues long: Conotoxin Gla(2)-TxVI/B (72 aa).

Residues 1–19 (MEKLIILLLVAAVLMSTQA) form the signal peptide. Residues 20–44 (LFQEKRTMKKIDFLSKGKADAEKQR) constitute a propeptide that is removed on maturation. Disulfide bonds link cysteine 48–cysteine 62, cysteine 55–cysteine 66, and cysteine 61–cysteine 70. Glutamate 56 bears the 4-carboxyglutamate mark. Proline 58 carries the post-translational modification 4-hydroxyproline. Residue serine 71 is modified to Serine amide.

Post-translationally, brominated at one of the Trp residues. As to expression, expressed by the venom duct.

It is found in the secreted. The protein is Conotoxin Gla(2)-TxVI/B of Conus textile (Cloth-of-gold cone).